A 285-amino-acid polypeptide reads, in one-letter code: Probable xyloglucan endotransglucosylase/hydrolase protein 12 (285 aa).

The signal sequence occupies residues 1 to 25 (MAAFATKQSPLLLASLLILIGVATG). The 190-residue stretch at 26–215 (SFYDSFDITW…WTNAPFSASY (190 aa)) folds into the GH16 domain. E101 functions as the Nucleophile in the catalytic mechanism. E105 acts as the Proton donor in catalysis. Residue E105 coordinates xyloglucan. N109 carries N-linked (GlcNAc...) asparagine glycosylation. Residues 118 to 120 (HTN), 128 to 130 (NRE), 194 to 195 (DW), and G199 each bind xyloglucan. 2 disulfide bridges follow: C224–C235 and C268–C282. R273 provides a ligand contact to xyloglucan.

The protein belongs to the glycosyl hydrolase 16 family. XTH group 2 subfamily. Post-translationally, contains at least one intrachain disulfide bond essential for its enzymatic activity. As to expression, root specific.

The protein resides in the secreted. The protein localises to the cell wall. It is found in the extracellular space. Its subcellular location is the apoplast. It carries out the reaction breaks a beta-(1-&gt;4) bond in the backbone of a xyloglucan and transfers the xyloglucanyl segment on to O-4 of the non-reducing terminal glucose residue of an acceptor, which can be a xyloglucan or an oligosaccharide of xyloglucan.. Functionally, catalyzes xyloglucan endohydrolysis (XEH) and/or endotransglycosylation (XET). Cleaves and religates xyloglucan polymers, an essential constituent of the primary cell wall, and thereby participates in cell wall construction of growing tissues. The protein is Probable xyloglucan endotransglucosylase/hydrolase protein 12 (XTH12) of Arabidopsis thaliana (Mouse-ear cress).